We begin with the raw amino-acid sequence, 161 residues long: Putative 4-hydroxy-4-methyl-2-oxoglutarate aldolase (161 aa).

Residues 75 to 78 and arginine 97 each bind substrate; that span reads GDNL. Aspartate 98 contacts a divalent metal cation.

The protein belongs to the class II aldolase/RraA-like family. As to quaternary structure, homotrimer. A divalent metal cation is required as a cofactor.

It catalyses the reaction 4-hydroxy-4-methyl-2-oxoglutarate = 2 pyruvate. It carries out the reaction oxaloacetate + H(+) = pyruvate + CO2. Its function is as follows. Catalyzes the aldol cleavage of 4-hydroxy-4-methyl-2-oxoglutarate (HMG) into 2 molecules of pyruvate. Also contains a secondary oxaloacetate (OAA) decarboxylase activity due to the common pyruvate enolate transition state formed following C-C bond cleavage in the retro-aldol and decarboxylation reactions. This Alkalilimnicola ehrlichii (strain ATCC BAA-1101 / DSM 17681 / MLHE-1) protein is Putative 4-hydroxy-4-methyl-2-oxoglutarate aldolase.